A 392-amino-acid chain; its full sequence is Early estrogen-induced gene 1 protein (392 aa).

In terms of domain architecture, C2 NT-type spans 2-145 (AFLMKKKKFK…ILKVTIGMFL (144 aa)). Residues 129–138 (NTRQDNSILK) are required for interaction with TNFRSF11A/RANK. Positions 173-324 (LTCKGGGTSS…RKKDSVESHP (152 aa)) are disordered. A compositionally biased stretch (low complexity) spans 183–194 (GGSSSTNSLTGS). Polar residues predominate over residues 228 to 255 (SRNSSYASQQSKLSGYSTEHSRSSSLSD). The span at 262 to 273 (TSTSSSASGGLS) shows a compositional bias: low complexity. Basic and acidic residues-rich tracts occupy residues 281-300 (GMEREHRPSEKPPRPPEKPP) and 307-324 (HLSDRSFRRKKDSVESHP).

This sequence belongs to the EEIG family. Part of a complex composed of EEIG1, TNFRSF11A/RANK, PLCG2, GAB2, TEC and BTK; complex formation increases in the presence of TNFSF11/RANKL. Interacts with PRDM1/BLIMP1; following TNFSF11/RANKL stimulation in bone marrow-derived macrophages, the interaction promotes the binding of PRDM1/BLIMP1 to the gene promoter of IRF8. Interacts (via N-terminus) with TNFRSF11A/RANK (via cytoplasmic domain); when in the presence of TNFSF11/RANKL. Expressed during TNFSF11/RANKL-induced differentiation of bone marrow-derived macrophages to osteoclasts.

The protein localises to the nucleus. It localises to the cytoplasm. The protein resides in the membrane raft. Key component of TNFSF11/RANKL- and TNF-induced osteoclastogenesis pathways, thereby mediates bone resorption in pathological bone loss conditions. Required for TNFSF11/RANKL-induced osteoclastogenesis via its interaction with TNFRSF11A/RANK, thereby facilitates the downsteam transcription of NFATC1 and activation of PLCG2. Facilitates recruitment of the transcriptional repressor PRDM1/BLIMP1 to the promoter of the anti-osteoclastogenesis gene IRF8, thereby resulting in transcription of osteoclast differentiation factors. May play a role in estrogen action. This is Early estrogen-induced gene 1 protein (Eeig1) from Mus musculus (Mouse).